Consider the following 113-residue polypeptide: Large ribosomal subunit protein P1 (113 aa).

A disordered region spans residues 84–113; sequence APAAAAKKETKKEEVKKEESDDDMGMGLFD. Positions 89 to 102 are enriched in basic and acidic residues; that stretch reads AKKETKKEEVKKEE.

It belongs to the eukaryotic ribosomal protein P1/P2 family. As to quaternary structure, P1 and P2 exist as dimers at the large ribosomal subunit.

Functionally, plays an important role in the elongation step of protein synthesis. The protein is Large ribosomal subunit protein P1 (rplp1) of Dictyostelium discoideum (Social amoeba).